We begin with the raw amino-acid sequence, 559 residues long: Paxillin (559 aa).

Positions 3 to 15 match the LD motif 1 motif; the sequence is DLDALLADLESTT. The segment at 17–139 is disordered; sequence HISKRPVFLT…SPTMTSTSLG (123 aa). Tyr-31 carries the post-translational modification Phosphotyrosine. A compositionally biased stretch (pro residues) spans 45–54; it reads VPPPVPPPPS. Residues 79-98 are compositionally biased toward low complexity; that stretch reads QQPQSQSPIYSSSAKSSSAS. Tyr-118 bears the Phosphotyrosine; by FAK1 mark. Polar residues predominate over residues 121–137; it reads PNKQKSAEPSPTMTSTS. An LD motif 2 motif is present at residues 144–156; sequence ELDRLLLELNAVQ. 2 disordered regions span residues 158–213 and 225–262; these read NPPS…GIED and LESS…SASS. The LD motif 3 signature appears at 217-229; sequence SVESLLDELESSV. Residues 237 to 262 show a composition bias toward polar residues; sequence TVSQGEVSSPQRVNASQQQTRISASS. The required for binding to PARVA and ILK stretch occupies residues 263–282; that stretch reads ATRELDELMASLSDFKFMAQ. 2 consecutive short sequence motifs (LD motif) follow at residues 266–277 and 301–313; these read ELDELMASLSDF and QLDT…QSDL. Residues 281–301 form a disordered region; it reads AQGKAGGSSSPPSTTPKPGSQ. LIM zinc-binding domains lie at 326-376, 385-435, 444-494, and 503-553; these read CGAC…CEKD, CYYC…CRKD, CGGC…CEVH, and CSGC…CQNC.

In terms of assembly, interacts (via LD motif 4) with PARVA/PARVIN and ILK. In terms of processing, phosphorylated on tyrosine residues during integrin-mediated cell adhesion, embryonic development, fibroblast transformation and following stimulation of cells by mitogens.

Its subcellular location is the cytoplasm. The protein resides in the cytoskeleton. It localises to the cell junction. It is found in the focal adhesion. The protein localises to the cell cortex. Cytoskeletal protein involved in actin-membrane attachment at sites of cell adhesion to the extracellular matrix (focal adhesion). Binds in vitro to vinculin as well as to the SH3 domain of c-SRC and, when tyrosine phosphorylated, to the SH2 domain of v-CRK. The protein is Paxillin (PXN) of Gallus gallus (Chicken).